The sequence spans 162 residues: 2-C-methyl-D-erythritol 2,4-cyclodiphosphate synthase (162 aa).

Residues D9 and H11 each contribute to the a divalent metal cation site. 4-CDP-2-C-methyl-D-erythritol 2-phosphate-binding positions include 9–11 (DVH) and 35–36 (HS). H43 provides a ligand contact to a divalent metal cation. 4-CDP-2-C-methyl-D-erythritol 2-phosphate is bound by residues 57–59 (DIG), 62–66 (FPDTD), 133–136 (TTTE), F140, and R143.

It belongs to the IspF family. In terms of assembly, homotrimer. It depends on a divalent metal cation as a cofactor.

It carries out the reaction 4-CDP-2-C-methyl-D-erythritol 2-phosphate = 2-C-methyl-D-erythritol 2,4-cyclic diphosphate + CMP. The protein operates within isoprenoid biosynthesis; isopentenyl diphosphate biosynthesis via DXP pathway; isopentenyl diphosphate from 1-deoxy-D-xylulose 5-phosphate: step 4/6. Its function is as follows. Involved in the biosynthesis of isopentenyl diphosphate (IPP) and dimethylallyl diphosphate (DMAPP), two major building blocks of isoprenoid compounds. Catalyzes the conversion of 4-diphosphocytidyl-2-C-methyl-D-erythritol 2-phosphate (CDP-ME2P) to 2-C-methyl-D-erythritol 2,4-cyclodiphosphate (ME-CPP) with a corresponding release of cytidine 5-monophosphate (CMP). The polypeptide is 2-C-methyl-D-erythritol 2,4-cyclodiphosphate synthase (Histophilus somni (strain 2336) (Haemophilus somnus)).